Reading from the N-terminus, the 241-residue chain is Agamous-like MADS-box protein AGL8 homolog (241 aa).

Residues 3–57 (RGRVQLKRIENKINRQVTFSKRRSGLLKKAHEISVLCDAEVALVIFSSKGKLFEY) enclose the MADS-box domain. The K-box domain occupies 88–178 (SENWVLEHAK…LKKIKEREKN (91 aa)).

It is found in the nucleus. In terms of biological role, probable transcription factor. This Sinapis alba (White mustard) protein is Agamous-like MADS-box protein AGL8 homolog (AGL8).